A 569-amino-acid polypeptide reads, in one-letter code: Glucose-6-phosphate isomerase, cytosolic 2A (569 aa).

The active-site Proton donor is glutamate 360. Active-site residues include histidine 391 and lysine 516.

Belongs to the GPI family. As to quaternary structure, homodimer.

It is found in the cytoplasm. The catalysed reaction is alpha-D-glucose 6-phosphate = beta-D-fructose 6-phosphate. It participates in carbohydrate degradation; glycolysis; D-glyceraldehyde 3-phosphate and glycerone phosphate from D-glucose: step 2/4. The chain is Glucose-6-phosphate isomerase, cytosolic 2A (PGIC2-A) from Clarkia lewisii (Farewell-to-spring).